The chain runs to 172 residues: Carotene biosynthesis-related protein CBR, chloroplastic (172 aa).

The disordered stretch occupies residues 41–66 (AENNPSTPPPSSPSPPPPPPTPAAPT). The span at 46 to 63 (STPPPSSPSPPPPPPTPA) shows a compositional bias: pro residues. Transmembrane regions (helical) follow at residues 111-131 (PTLIALTFVLFSAASLIPAFA) and 152-172 (FAMIGFAAMLVYEGIQGIALF).

The protein belongs to the ELIP/psbS family.

The protein resides in the plastid. Its subcellular location is the chloroplast membrane. Putative zeaxanthin binding protein. That forms photoprotective complexes within the light-harvesting antennae. The chain is Carotene biosynthesis-related protein CBR, chloroplastic (CBR) from Dunaliella salina (Green alga).